Here is a 256-residue protein sequence, read N- to C-terminus: uncharacterized protein (256 aa).

An N-terminal signal peptide occupies residues 1–24; it reads MIKRVNKLVIGISLLFLVISITAG. A lipid anchor (N-palmitoyl cysteine) is attached at Cys-25. Residue Cys-25 is the site of S-diacylglycerol cysteine attachment.

It belongs to the staphylococcal tandem lipoprotein family.

It is found in the cell membrane. This is an uncharacterized protein from Staphylococcus aureus (strain bovine RF122 / ET3-1).